The primary structure comprises 216 residues: Nucleoside triphosphate pyrophosphatase (216 aa).

Residue D86 is the Proton acceptor of the active site.

The protein belongs to the Maf family. A divalent metal cation serves as cofactor.

Its subcellular location is the cytoplasm. It catalyses the reaction a ribonucleoside 5'-triphosphate + H2O = a ribonucleoside 5'-phosphate + diphosphate + H(+). The enzyme catalyses a 2'-deoxyribonucleoside 5'-triphosphate + H2O = a 2'-deoxyribonucleoside 5'-phosphate + diphosphate + H(+). Nucleoside triphosphate pyrophosphatase. May have a dual role in cell division arrest and in preventing the incorporation of modified nucleotides into cellular nucleic acids. The polypeptide is Nucleoside triphosphate pyrophosphatase (Dictyostelium discoideum (Social amoeba)).